We begin with the raw amino-acid sequence, 685 residues long: Putative alpha-1,3-mannosyltransferase MNN14 (685 aa).

Over methionine 1–lysine 13 the chain is Cytoplasmic. A helical transmembrane segment spans residues leucine 14–serine 34. Residues glutamine 35–leucine 685 lie on the Lumenal side of the membrane. N-linked (GlcNAc...) asparagine glycosylation is found at asparagine 199, asparagine 338, asparagine 408, and asparagine 556.

It belongs to the MNN1/MNT family.

The protein localises to the golgi apparatus membrane. It participates in protein modification; protein glycosylation. Functionally, responsible for addition of the terminal mannose residues to the outer chain of core N-linked polysaccharides and to O-linked mannotriose. Implicated in late Golgi modifications. Involved in virulence. The protein is Putative alpha-1,3-mannosyltransferase MNN14 (MNN14) of Candida albicans (strain SC5314 / ATCC MYA-2876) (Yeast).